An 854-amino-acid chain; its full sequence is Periodic tryptophan protein 2 homolog (854 aa).

13 WD repeats span residues 9 to 52 (NLVG…TFPF), 53 to 93 (ENHK…LHYF), 94 to 132 (NFKS…EERE), 144 to 183 (GHFD…GFHP), 188 to 227 (GHKN…QAGE), 252 to 291 (NQNS…MLYQ), 294 to 334 (ITQS…YVLK), 337 to 376 (SHYD…CIVT), 379 to 418 (QHTS…NFRT), 422 to 464 (PSRV…ETLA), 465 to 504 (GHEG…GIVE), 507 to 546 (PIPS…QTSL), and 569 to 608 (SLNK…LIKK). Thr-640 bears the Phosphothreonine mark. Ser-645 carries the phosphoserine modification. A WD 14 repeat occupies 668-709 (TRPEIICHGVQFSPSGGAFAAATTEGLMIYSLYNDFLFDPIN).

It belongs to the WD repeat PWP2 family.

This chain is Periodic tryptophan protein 2 homolog, found in Schizosaccharomyces pombe (strain 972 / ATCC 24843) (Fission yeast).